A 387-amino-acid polypeptide reads, in one-letter code: F-box protein DOR (387 aa).

One can recognise an F-box domain in the interval 19-64; sequence DENFEPIPIDLVIEIFSRSPVKSIARCRCVSKLWASILRLPYFTEL.

Part of a SCF (ASK-cullin-F-box) protein ligase complex. Interacts with ASK14 and CUL1. Strongly expressed in guard cells. Mostly represented in seedlings, leaves and flowers, and, to a lower extent, in roots and siliques.

Its pathway is protein modification; protein ubiquitination. In terms of biological role, component of SCF(ASK-cullin-F-box) E3 ubiquitin ligase complexes, which may mediate the ubiquitination and subsequent proteasomal degradation of target proteins. Negative regulator of guard cell abscisic acid (ABA) signaling, especially during drought stress. The polypeptide is F-box protein DOR (DOR) (Arabidopsis thaliana (Mouse-ear cress)).